Consider the following 1299-residue polypeptide: DNA-directed RNA polymerase subunit beta' (1299 aa).

The Zn(2+) site is built by Cys60, Cys62, Cys75, and Cys78. Mg(2+) is bound by residues Asp535, Asp537, and Asp539. 4 residues coordinate Zn(2+): Cys877, Cys954, Cys961, and Cys964.

This sequence belongs to the RNA polymerase beta' chain family. The RNAP catalytic core consists of 2 alpha, 1 beta, 1 beta' and 1 omega subunit. When a sigma factor is associated with the core the holoenzyme is formed, which can initiate transcription. Mg(2+) is required as a cofactor. Requires Zn(2+) as cofactor.

It catalyses the reaction RNA(n) + a ribonucleoside 5'-triphosphate = RNA(n+1) + diphosphate. Functionally, DNA-dependent RNA polymerase catalyzes the transcription of DNA into RNA using the four ribonucleoside triphosphates as substrates. This is DNA-directed RNA polymerase subunit beta' from Renibacterium salmoninarum (strain ATCC 33209 / DSM 20767 / JCM 11484 / NBRC 15589 / NCIMB 2235).